We begin with the raw amino-acid sequence, 152 residues long: Transcriptional regulator MraZ (152 aa).

2 consecutive SpoVT-AbrB domains span residues 5-52 and 81-124; these read ATTL…PLPE and ADDC…NEDA.

Belongs to the MraZ family. Forms oligomers.

It localises to the cytoplasm. Its subcellular location is the nucleoid. The chain is Transcriptional regulator MraZ from Idiomarina loihiensis (strain ATCC BAA-735 / DSM 15497 / L2-TR).